A 342-amino-acid chain; its full sequence is tRNA-specific 2-thiouridylase MnmA (342 aa).

ATP contacts are provided by residues 6–13 (LLSGGVDS) and L32. The active-site Nucleophile is C92. C92 and C191 are disulfide-bonded. G116 contributes to the ATP binding site. An interaction with tRNA region spans residues 138-140 (KDQ). The Cysteine persulfide intermediate role is filled by C191. The tract at residues 293–294 (RY) is interaction with tRNA.

This sequence belongs to the MnmA/TRMU family.

It is found in the cytoplasm. The catalysed reaction is S-sulfanyl-L-cysteinyl-[protein] + uridine(34) in tRNA + AH2 + ATP = 2-thiouridine(34) in tRNA + L-cysteinyl-[protein] + A + AMP + diphosphate + H(+). Its function is as follows. Catalyzes the 2-thiolation of uridine at the wobble position (U34) of tRNA, leading to the formation of s(2)U34. The sequence is that of tRNA-specific 2-thiouridylase MnmA from Helicobacter pylori (strain HPAG1).